The chain runs to 301 residues: Glycine--tRNA ligase alpha subunit (301 aa).

It belongs to the class-II aminoacyl-tRNA synthetase family. As to quaternary structure, tetramer of two alpha and two beta subunits.

The protein resides in the cytoplasm. The enzyme catalyses tRNA(Gly) + glycine + ATP = glycyl-tRNA(Gly) + AMP + diphosphate. This is Glycine--tRNA ligase alpha subunit from Shewanella halifaxensis (strain HAW-EB4).